We begin with the raw amino-acid sequence, 100 residues long: Aspartyl/glutamyl-tRNA(Asn/Gln) amidotransferase subunit C (100 aa).

It belongs to the GatC family. In terms of assembly, heterotrimer of A, B and C subunits.

The catalysed reaction is L-glutamyl-tRNA(Gln) + L-glutamine + ATP + H2O = L-glutaminyl-tRNA(Gln) + L-glutamate + ADP + phosphate + H(+). The enzyme catalyses L-aspartyl-tRNA(Asn) + L-glutamine + ATP + H2O = L-asparaginyl-tRNA(Asn) + L-glutamate + ADP + phosphate + 2 H(+). Its function is as follows. Allows the formation of correctly charged Asn-tRNA(Asn) or Gln-tRNA(Gln) through the transamidation of misacylated Asp-tRNA(Asn) or Glu-tRNA(Gln) in organisms which lack either or both of asparaginyl-tRNA or glutaminyl-tRNA synthetases. The reaction takes place in the presence of glutamine and ATP through an activated phospho-Asp-tRNA(Asn) or phospho-Glu-tRNA(Gln). This chain is Aspartyl/glutamyl-tRNA(Asn/Gln) amidotransferase subunit C, found in Streptococcus equi subsp. zooepidemicus (strain H70).